We begin with the raw amino-acid sequence, 615 residues long: Proteasome-associated ATPase (615 aa).

Residues 1–36 are disordered; sequence MSESERPEAGDGTDALGASPDTPLSSEDAAELEQLR. Residues 25–102 adopt a coiled-coil conformation; it reads SSEDAAELEQ…LREEVDRLGQ (78 aa). 302–307 is an ATP binding site; the sequence is GCGKTL. The segment at 614-615 is docks into pockets in the proteasome alpha-ring; the sequence is YL.

Belongs to the AAA ATPase family. As to quaternary structure, homohexamer. Assembles into a hexameric ring structure that caps the 20S proteasome core. Strongly interacts with the prokaryotic ubiquitin-like protein Pup through a hydrophobic interface; the interacting region of ARC lies in its N-terminal coiled-coil domain. There is one Pup binding site per ARC hexamer ring. Upon ATP-binding, the C-terminus of ARC interacts with the alpha-rings of the proteasome core, possibly by binding to the intersubunit pockets.

It participates in protein degradation; proteasomal Pup-dependent pathway. Functionally, ATPase which is responsible for recognizing, binding, unfolding and translocation of pupylated proteins into the bacterial 20S proteasome core particle. May be essential for opening the gate of the 20S proteasome via an interaction with its C-terminus, thereby allowing substrate entry and access to the site of proteolysis. Thus, the C-termini of the proteasomal ATPase may function like a 'key in a lock' to induce gate opening and therefore regulate proteolysis. The polypeptide is Proteasome-associated ATPase (Mycolicibacterium gilvum (strain PYR-GCK) (Mycobacterium gilvum (strain PYR-GCK))).